Reading from the N-terminus, the 469-residue chain is MDSHPWIPNSTREIREKMLEKIGVKNIDEFFNDIPRNIRISKEEWDNLEIGLKKPISEITARRIIEEKLSMNKVFVPLLFLGGGAYPHYVPSVIKYLISRGEFLTSYTPYQPEISQGILQALFEYQSLMAELLDMDVVNSSMYDWASALAEALLMSLRVKKNKKKILLPSNMNPIHKRVVNTYLSPHNVRIEYVNYNHDTGLIDLEDLKNKIDNDTAAVYVQSPNFFGYIEENAKEIGEIVHDIDSLFIMGIDPISLGLIKPPGELGADIAVGEGQPLGLGLNYGGPYLGIFATRMDMKLVRQMPGRIIGLTRSVDGSRAFTMILQTREQHIRRAKATSNICTNEALSAIAAAIYLALLGKSGIRKLAELIYYRSHYAQARLREIGLNTDIFKSDFFKEFPINFDNIGVKYRYVHEKLLENNIHGGLYIGNWFPELGETALYAFTEIHTKNDIDLLVEKLADIINELKR.

This sequence belongs to the GcvP family. N-terminal subunit subfamily. In terms of assembly, the glycine cleavage system is composed of four proteins: P, T, L and H. In this organism, the P 'protein' is a heterodimer of two subunits.

The enzyme catalyses N(6)-[(R)-lipoyl]-L-lysyl-[glycine-cleavage complex H protein] + glycine + H(+) = N(6)-[(R)-S(8)-aminomethyldihydrolipoyl]-L-lysyl-[glycine-cleavage complex H protein] + CO2. Functionally, the glycine cleavage system catalyzes the degradation of glycine. The P protein binds the alpha-amino group of glycine through its pyridoxal phosphate cofactor; CO(2) is released and the remaining methylamine moiety is then transferred to the lipoamide cofactor of the H protein. In Staphylothermus marinus (strain ATCC 43588 / DSM 3639 / JCM 9404 / F1), this protein is Probable glycine dehydrogenase (decarboxylating) subunit 1.